Reading from the N-terminus, the 226-residue chain is Isoprenyl transferase (226 aa).

D12 is an active-site residue. D12 is a binding site for Mg(2+). Residues 13-16 (GNAR), W17, K25, H29, and 57-59 (SSE) each bind substrate. N60 serves as the catalytic Proton acceptor. Substrate contacts are provided by residues W61, R63, R174, and 180–182 (RIS). E193 contacts Mg(2+).

The protein belongs to the UPP synthase family. Homodimer. Requires Mg(2+) as cofactor.

Its function is as follows. Catalyzes the condensation of isopentenyl diphosphate (IPP) with allylic pyrophosphates generating different type of terpenoids. The polypeptide is Isoprenyl transferase (Rickettsia sibirica (strain ATCC VR-151 / 246)).